Here is a 61-residue protein sequence, read N- to C-terminus: ATP synthase F(0) complex subunit 8 (61 aa).

A helical transmembrane segment spans residues Phe10–Leu32.

It belongs to the ATPase protein 8 family. In terms of assembly, component of the ATP synthase complex composed at least of ATP5F1A/subunit alpha, ATP5F1B/subunit beta, ATP5MC1/subunit c (homooctomer), MT-ATP6/subunit a, MT-ATP8/subunit 8, ATP5ME/subunit e, ATP5MF/subunit f, ATP5MG/subunit g, ATP5MK/subunit k, ATP5MJ/subunit j, ATP5F1C/subunit gamma, ATP5F1D/subunit delta, ATP5F1E/subunit epsilon, ATP5PF/subunit F6, ATP5PB/subunit b, ATP5PD/subunit d, ATP5PO/subunit OSCP. ATP synthase complex consists of a soluble F(1) head domain (subunits alpha(3) and beta(3)) - the catalytic core - and a membrane F(0) domain - the membrane proton channel (subunits c, a, 8, e, f, g, k and j). These two domains are linked by a central stalk (subunits gamma, delta, and epsilon) rotating inside the F1 region and a stationary peripheral stalk (subunits F6, b, d, and OSCP).

The protein resides in the mitochondrion membrane. Functionally, subunit 8, of the mitochondrial membrane ATP synthase complex (F(1)F(0) ATP synthase or Complex V) that produces ATP from ADP in the presence of a proton gradient across the membrane which is generated by electron transport complexes of the respiratory chain. ATP synthase complex consist of a soluble F(1) head domain - the catalytic core - and a membrane F(1) domain - the membrane proton channel. These two domains are linked by a central stalk rotating inside the F(1) region and a stationary peripheral stalk. During catalysis, ATP synthesis in the catalytic domain of F(1) is coupled via a rotary mechanism of the central stalk subunits to proton translocation. In vivo, can only synthesize ATP although its ATP hydrolase activity can be activated artificially in vitro. Part of the complex F(0) domain. This is ATP synthase F(0) complex subunit 8 from Chelonia mydas (Green sea-turtle).